The sequence spans 363 residues: Chorismate synthase (363 aa).

The disordered stretch occupies residues 42–61 (QRDLDRRKPGTSRHTTQRQE). NADP(+) contacts are provided by R48 and R54. FMN is bound by residues 125-127 (RSS), 237-238 (NA), G277, 292-296 (KPTSS), and R318.

This sequence belongs to the chorismate synthase family. As to quaternary structure, homotetramer. The cofactor is FMNH2.

It catalyses the reaction 5-O-(1-carboxyvinyl)-3-phosphoshikimate = chorismate + phosphate. It participates in metabolic intermediate biosynthesis; chorismate biosynthesis; chorismate from D-erythrose 4-phosphate and phosphoenolpyruvate: step 7/7. Functionally, catalyzes the anti-1,4-elimination of the C-3 phosphate and the C-6 proR hydrogen from 5-enolpyruvylshikimate-3-phosphate (EPSP) to yield chorismate, which is the branch point compound that serves as the starting substrate for the three terminal pathways of aromatic amino acid biosynthesis. This reaction introduces a second double bond into the aromatic ring system. The polypeptide is Chorismate synthase (Pseudomonas aeruginosa (strain LESB58)).